A 389-amino-acid chain; its full sequence is Na(+)/H(+) antiporter NhaA (389 aa).

The next 10 helical transmembrane spans lie at 8 to 28 (INFL…ALVW), 48 to 68 (ISLH…MAAI), 91 to 111 (MATL…NALI), 119 to 139 (GWGI…RVVF), 173 to 193 (NPVA…AYLL), 214 to 234 (AGLY…VPFL), 262 to 282 (WKIF…GVEF), 288 to 308 (LTWL…FLMG), 327 to 347 (LLVA…VSGV), and 361 to 381 (GALF…VLGI).

Belongs to the NhaA Na(+)/H(+) (TC 2.A.33) antiporter family.

The protein resides in the cell membrane. The enzyme catalyses Na(+)(in) + 2 H(+)(out) = Na(+)(out) + 2 H(+)(in). In terms of biological role, na(+)/H(+) antiporter that extrudes sodium in exchange for external protons. This is Na(+)/H(+) antiporter NhaA from Desulfitobacterium hafniense (strain DSM 10664 / DCB-2).